Consider the following 87-residue polypeptide: Apolipoprotein C-I (87 aa).

A signal peptide spans 1 to 26 (MRFILSLPVLAVVLAMVLEGPAPAQA).

It belongs to the apolipoprotein C1 family.

Its subcellular location is the secreted. Functionally, inhibitor of lipoprotein binding to the low density lipoprotein (LDL) receptor, LDL receptor-related protein, and very low density lipoprotein (VLDL) receptor. Associates with high density lipoproteins (HDL) and the triacylglycerol-rich lipoproteins in the plasma and makes up about 10% of the protein of the VLDL and 2% of that of HDL. Appears to interfere directly with fatty acid uptake and is also the major plasma inhibitor of cholesteryl ester transfer protein (CETP). Binds free fatty acids and reduces their intracellular esterification. Modulates the interaction of APOE with beta-migrating VLDL and inhibits binding of beta-VLDL to the LDL receptor-related protein. The protein is Apolipoprotein C-I (APOC1) of Pteropus alecto (Black flying fox).